A 353-amino-acid polypeptide reads, in one-letter code: Dihydroorotate dehydrogenase (quinone) (353 aa).

FMN is bound by residues 66-70 and Thr-90; that span reads AGFDK. Lys-70 lines the substrate pocket. 115-119 serves as a coordination point for substrate; that stretch reads NRMGF. FMN is bound by residues Asn-143 and Asn-176. Asn-176 contributes to the substrate binding site. The active-site Nucleophile is the Ser-179. A substrate-binding site is contributed by Asn-181. FMN is bound by residues Lys-212 and Thr-240. 241-242 contacts substrate; sequence NT. Residues Gly-264, Gly-293, and 314–315 each bind FMN; that span reads YT.

Belongs to the dihydroorotate dehydrogenase family. Type 2 subfamily. Monomer. FMN serves as cofactor.

Its subcellular location is the cell membrane. It carries out the reaction (S)-dihydroorotate + a quinone = orotate + a quinol. It participates in pyrimidine metabolism; UMP biosynthesis via de novo pathway; orotate from (S)-dihydroorotate (quinone route): step 1/1. Functionally, catalyzes the conversion of dihydroorotate to orotate with quinone as electron acceptor. The protein is Dihydroorotate dehydrogenase (quinone) of Mycolicibacterium vanbaalenii (strain DSM 7251 / JCM 13017 / BCRC 16820 / KCTC 9966 / NRRL B-24157 / PYR-1) (Mycobacterium vanbaalenii).